Here is a 511-residue protein sequence, read N- to C-terminus: Ribonuclease Y (511 aa).

The chain crosses the membrane as a helical span at residues 3 to 23 (VGILIGIIILGVVGFIQYTLI). The KH domain occupies 201–286 (TVHVVALPND…EMVERAIKDV (86 aa)). Positions 327–420 (VLKHSIEVSY…VQAADAISAA (94 aa)) constitute an HD domain.

It belongs to the RNase Y family.

It localises to the cell membrane. Functionally, endoribonuclease that initiates mRNA decay. The protein is Ribonuclease Y of Clostridium perfringens (strain ATCC 13124 / DSM 756 / JCM 1290 / NCIMB 6125 / NCTC 8237 / Type A).